The following is a 241-amino-acid chain: Endothelial protein C receptor (241 aa).

Positions 1 to 17 are cleaved as a signal peptide; it reads MLTTLLPLLPLLLPGWA. At 18 to 212 the chain is on the extracellular side; that stretch reads LCSQEASDGP…GSQTGRSYTS (195 aa). 4 N-linked (GlcNAc...) asparagine glycosylation sites follow: N49, N66, N138, and N174. 2 disulfide bridges follow: C120/C188 and C221/C234. A helical transmembrane segment spans residues 213–233; it reads LVLGVLVGCFIVTGVAVGIFL. The Cytoplasmic segment spans residues 234-241; sequence CTGGRRRC.

Expressed in endothelial cells.

The protein localises to the membrane. Binds activated protein C. Enhances protein C activation by the thrombin-thrombomodulin complex; plays a role in the protein C pathway controlling blood coagulation. The protein is Endothelial protein C receptor (PROCR) of Bos taurus (Bovine).